The chain runs to 977 residues: DNA-directed RNA polymerase 3A, chloroplastic (977 aa).

A chloroplast-targeting transit peptide spans 1-72; it reads MASTASYSPS…NNIQSQTTVC (72 aa). Active-site residues include Asp-678, Lys-753, and Asp-910.

The protein belongs to the phage and mitochondrial RNA polymerase family.

The protein localises to the plastid. The protein resides in the chloroplast. It carries out the reaction RNA(n) + a ribonucleoside 5'-triphosphate = RNA(n+1) + diphosphate. Its function is as follows. DNA-dependent RNA polymerase catalyzes the transcription of DNA into RNA using the four ribonucleoside triphosphates as substrates. The protein is DNA-directed RNA polymerase 3A, chloroplastic (RPOT3-SYL) of Nicotiana tabacum (Common tobacco).